Consider the following 427-residue polypeptide: MGFISSILCCSSETTQSNSNSAYRQQQSSSLNKNRSVKHSNTKSRTRGVHQTNSPPSKTNSAATFSSTERSTGKSGISTNDNEKKKPSSPTAAVTATTTNNMTKVEKRISKDDLYEEKYEVDEDEEIDDEDNRRSRGIVQEKGDAVKDTSRQKKQQQQQQQQSQPQPQPQSQSQSQSQSQSQQRGPTVQVSSDHLIQDMNLSRVSSSSQASETSNDADDEDDEDEEYIDLTLLQQGQYHAPGYNTLLPPQDESTKGKKCLILDLDETLVHSSFKYLRSADFVLSVEIDDQVHNVYVIKRPGVEEFLERVGKLFEVVVFTASVSRYGDPLLDILDTDKVIHHRLFREACYNYEGNYIKNLSQIGRPLSDIIILDNSPASYIFHPQHAIPISSWFSDTHDNELLDIIPLLEDLSVKTSLDVGKILDVTI.

Residues C9 and C10 are each lipidated (S-palmitoyl cysteine). The span at 14-34 (TTQSNSNSAYRQQQSSSLNKN) shows a compositional bias: polar residues. Positions 14–223 (TTQSNSNSAY…SNDADDEDDE (210 aa)) are disordered. Over residues 35–48 (RSVKHSNTKSRTRG) the composition is skewed to basic residues. Polar residues predominate over residues 49–80 (VHQTNSPPSKTNSAATFSSTERSTGKSGISTN). Residues 104-118 (KVEKRISKDDLYEEK) are compositionally biased toward basic and acidic residues. At S110 the chain carries Phosphoserine. The segment covering 119–130 (YEVDEDEEIDDE) has biased composition (acidic residues). Over residues 131–151 (DNRRSRGIVQEKGDAVKDTSR) the composition is skewed to basic and acidic residues. A Glycyl lysine isopeptide (Lys-Gly) (interchain with G-Cter in ubiquitin) cross-link involves residue K154. The span at 155–183 (QQQQQQQQSQPQPQPQSQSQSQSQSQSQQ) shows a compositional bias: low complexity. Residues 184–214 (RGPTVQVSSDHLIQDMNLSRVSSSSQASETS) are compositionally biased toward polar residues. The FCP1 homology domain occupies 253 to 411 (STKGKKCLIL…LDIIPLLEDL (159 aa)).

In terms of assembly, interacts with WHI2.

It localises to the cell membrane. Functionally, has phosphatase activity in vitro. Involved in the response to sodium and lithium ion stress (but not to potassium or sorbitol stress) by inducing transcription of the sodium pump ENA1/PMR2. Acts through a calcineurin-independent pathway and is functionally redundant with PSR2. Also involved in the general stress response; acts together with WHI2 to activate stress response element (STRE)-mediated gene expression, possibly through dephosphorylation of MSN2. The polypeptide is Phosphatase PSR1 (PSR1) (Saccharomyces cerevisiae (strain ATCC 204508 / S288c) (Baker's yeast)).